Consider the following 347-residue polypeptide: GMP reductase (347 aa).

108–131 (ADFEKTKQILAQSPALNFVCIDVA) serves as a coordination point for NADP(+). 2 residues coordinate K(+): glycine 181 and glycine 183. The active-site Thioimidate intermediate is the cysteine 186. 216-239 (IVSDGGCTMPGDVAKAFGGGADFV) contacts NADP(+).

The protein belongs to the IMPDH/GMPR family. GuaC type 1 subfamily. In terms of assembly, homotetramer.

It carries out the reaction IMP + NH4(+) + NADP(+) = GMP + NADPH + 2 H(+). Its function is as follows. Catalyzes the irreversible NADPH-dependent deamination of GMP to IMP. It functions in the conversion of nucleobase, nucleoside and nucleotide derivatives of G to A nucleotides, and in maintaining the intracellular balance of A and G nucleotides. The sequence is that of GMP reductase from Citrobacter koseri (strain ATCC BAA-895 / CDC 4225-83 / SGSC4696).